We begin with the raw amino-acid sequence, 73 residues long: Somatostatin-2 (73 aa).

The propeptide occupies 1–45 (SAGLLTQEWSAVEDLLAQMSLPEADAQRDAEMVSTATGGGRMNQE). Positions 23–58 (EADAQRDAEMVSTATGGGRMNQESIEPPNNLPPRER) are disordered. Cysteine 62 and cysteine 73 are oxidised to a cystine.

The protein belongs to the somatostatin family.

The protein localises to the secreted. Somatostatin inhibits the release of somatotropin. This is Somatostatin-2 (sst2) from Platichthys flesus (European flounder).